A 181-amino-acid chain; its full sequence is Cytochrome c-type biogenesis protein CcmE (181 aa).

The Cytoplasmic portion of the chain corresponds to 1 to 8 (MNPRRKSR). A helical; Signal-anchor for type II membrane protein transmembrane segment spans residues 9-29 (LKVVVLIMFSVAVAAGLTLYA). The Periplasmic segment spans residues 30 to 181 (LSQNIDLFYT…TFNTLQGESK (152 aa)). 2 residues coordinate heme: His-131 and Tyr-135.

This sequence belongs to the CcmE/CycJ family.

Its subcellular location is the cell inner membrane. Functionally, heme chaperone required for the biogenesis of c-type cytochromes. Transiently binds heme delivered by CcmC and transfers the heme to apo-cytochromes in a process facilitated by CcmF and CcmH. In Haemophilus ducreyi (strain 35000HP / ATCC 700724), this protein is Cytochrome c-type biogenesis protein CcmE.